A 539-amino-acid polypeptide reads, in one-letter code: Protein Wnt-4 (539 aa).

A signal peptide spans 1–21; that stretch reads MPSPTGVFVLMILTHLSFGLG. Positions 34 to 77 are disordered; it reads QNGDLDSSNPAIHHQQHQQHQQHQQHQQHQSNHNLNNGNMNSTI. The span at 51-74 shows a compositional bias: low complexity; sequence QQHQQHQQHQQHQSNHNLNNGNMN. N74 and N284 each carry an N-linked (GlcNAc...) asparagine glycan. Intrachain disulfides connect C274–C285, C322–C330, C332–C349, C397–C411, and C399–C406. S403 carries O-palmitoleoyl serine; by PORCN lipidation. Residue N419 is glycosylated (N-linked (GlcNAc...) asparagine). A disordered region spans residues 436 to 463; that stretch reads APNQRSMRQVSSSRMKKPKQRRKKPQQS. Residues 439–448 show a composition bias toward low complexity; it reads QRSMRQVSSS. Residues 449–460 show a composition bias toward basic residues; sequence RMKKPKQRRKKP. 6 cysteine pairs are disulfide-bonded: C478–C497, C486–C492, C496–C538, C512–C529, C514–C526, and C521–C522.

The protein belongs to the Wnt family. In terms of processing, palmitoleoylated by porcupine. The lipid group functions as a sorting signal, targeting the ligand to polarized vesicles that transport Wnt4 to unique sites at the cell surface. Depalmitoleoylated by notum, leading to inhibit Wnt signaling pathway.

The protein resides in the secreted. The protein localises to the extracellular space. Its subcellular location is the extracellular matrix. Its function is as follows. Binds as a ligand to a family of frizzled seven-transmembrane receptors and acts through a cascade of genes on the nucleus. Acts downstream of homeotic complex genes in the visceral mesoderm and is required for embryonic segmentation. Also required for cell movement and FAK regulation during ovarian morphogenesis. In Drosophila melanogaster (Fruit fly), this protein is Protein Wnt-4 (Wnt4).